Reading from the N-terminus, the 417-residue chain is Tyrosine--tRNA ligase (417 aa).

Tyrosine 34 is a binding site for L-tyrosine. Positions 39 to 48 match the 'HIGH' region motif; it reads PTAKSIHIGN. L-tyrosine-binding residues include tyrosine 165 and glutamine 169. The 'KMSKS' region motif lies at 227–231; it reads KFGKS. Residue lysine 230 participates in ATP binding. The region spanning 349–416 is the S4 RNA-binding domain; it reads TDVVELLVKD…GKKKYFLAKV (68 aa).

This sequence belongs to the class-I aminoacyl-tRNA synthetase family. TyrS type 1 subfamily. As to quaternary structure, homodimer.

It is found in the cytoplasm. It catalyses the reaction tRNA(Tyr) + L-tyrosine + ATP = L-tyrosyl-tRNA(Tyr) + AMP + diphosphate + H(+). Functionally, catalyzes the attachment of tyrosine to tRNA(Tyr) in a two-step reaction: tyrosine is first activated by ATP to form Tyr-AMP and then transferred to the acceptor end of tRNA(Tyr). This Oenococcus oeni (strain ATCC BAA-331 / PSU-1) protein is Tyrosine--tRNA ligase.